The chain runs to 343 residues: L-threonine 3-dehydrogenase (343 aa).

Residue C38 coordinates Zn(2+). Active-site charge relay system residues include T40 and H43. Positions 63, 64, 93, 96, 99, and 107 each coordinate Zn(2+). NAD(+) contacts are provided by residues I175, D195, R200, L262 to L264, and I286 to Y287.

It belongs to the zinc-containing alcohol dehydrogenase family. As to quaternary structure, homotetramer. Requires Zn(2+) as cofactor.

Its subcellular location is the cytoplasm. It carries out the reaction L-threonine + NAD(+) = (2S)-2-amino-3-oxobutanoate + NADH + H(+). It functions in the pathway amino-acid degradation; L-threonine degradation via oxydo-reductase pathway; glycine from L-threonine: step 1/2. Its function is as follows. Catalyzes the NAD(+)-dependent oxidation of L-threonine to 2-amino-3-ketobutyrate. This is L-threonine 3-dehydrogenase from Saccharopolyspora erythraea (strain ATCC 11635 / DSM 40517 / JCM 4748 / NBRC 13426 / NCIMB 8594 / NRRL 2338).